The chain runs to 586 residues: 25S rRNA (adenine-N(1))-methyltransferase (586 aa).

Disordered stretches follow at residues 23-229 (GTAP…LTPL) and 536-573 (GKCV…EVKD). Over residues 25–41 (APAAPAPASAPAVSSSK) the composition is skewed to low complexity. Residues 65-83 (LWEKVIEQKKEGVADGVKK) are compositionally biased toward basic and acidic residues. Positions 99-108 (KLSNSNNDGN) are enriched in polar residues. Over residues 114-123 (NNKKKNKNKN) the composition is skewed to basic residues. Over residues 144-163 (GEEDEDDNNDDADEWEGIDE) the composition is skewed to acidic residues. Basic and acidic residues predominate over residues 164–182 (DEKHASSEKPTPKKDDKKQ). Residues 183-192 (QQLQQQQQQK) show a composition bias toward low complexity. Residues 204–213 (NGTTSNWQQD) show a composition bias toward polar residues. The segment covering 217–229 (PKTATPAPKLTPL) has biased composition (low complexity). The span at 539-549 (VPKDGQEDTTK) shows a compositional bias: basic and acidic residues. A compositionally biased stretch (basic residues) spans 550–559 (NKKGGQKPKP).

It belongs to the methyltransferase superfamily. RRP8 family.

The protein resides in the nucleus. It is found in the nucleolus. In terms of biological role, S-adenosyl-L-methionine-dependent methyltransferase that specifically methylates the N(1) position of a conserved adenine in helix 25.1 in 25S rRNA. Required both for ribosomal 40S and 60S subunits biogenesis. Required for efficient pre-rRNA cleavage at site A2. This Chaetomium thermophilum (strain DSM 1495 / CBS 144.50 / IMI 039719) (Thermochaetoides thermophila) protein is 25S rRNA (adenine-N(1))-methyltransferase (RPR8).